We begin with the raw amino-acid sequence, 244 residues long: Probable transcriptional regulatory protein CHAB381_1426 (244 aa).

It belongs to the TACO1 family.

It is found in the cytoplasm. In Campylobacter hominis (strain ATCC BAA-381 / DSM 21671 / CCUG 45161 / LMG 19568 / NCTC 13146 / CH001A), this protein is Probable transcriptional regulatory protein CHAB381_1426.